Reading from the N-terminus, the 280-residue chain is NAD kinase (280 aa).

The active-site Proton acceptor is aspartate 67. Residues 67–68 (DG), arginine 72, 138–139 (ND), aspartate 167, alanine 175, 178–183 (TAYSLS), and glutamine 237 each bind NAD(+).

The protein belongs to the NAD kinase family. It depends on a divalent metal cation as a cofactor.

Its subcellular location is the cytoplasm. It carries out the reaction NAD(+) + ATP = ADP + NADP(+) + H(+). Its function is as follows. Involved in the regulation of the intracellular balance of NAD and NADP, and is a key enzyme in the biosynthesis of NADP. Catalyzes specifically the phosphorylation on 2'-hydroxyl of the adenosine moiety of NAD to yield NADP. This chain is NAD kinase, found in Aeropyrum pernix (strain ATCC 700893 / DSM 11879 / JCM 9820 / NBRC 100138 / K1).